The following is a 154-amino-acid chain: Myoglobin (154 aa).

In terms of domain architecture, Globin spans 2–148 (GLSDGEWQSV…FRNDIAAKYK (147 aa)). Phosphoserine is present on Ser-4. Nitrite is bound at residue His-65. His-65 provides a ligand contact to O2. A Phosphothreonine modification is found at Thr-68. Heme b is bound at residue His-94.

This sequence belongs to the globin family. As to quaternary structure, monomeric.

It localises to the cytoplasm. It is found in the sarcoplasm. It catalyses the reaction Fe(III)-heme b-[protein] + nitric oxide + H2O = Fe(II)-heme b-[protein] + nitrite + 2 H(+). It carries out the reaction H2O2 + AH2 = A + 2 H2O. Monomeric heme protein which primary function is to store oxygen and facilitate its diffusion within muscle tissues. Reversibly binds oxygen through a pentacoordinated heme iron and enables its timely and efficient release as needed during periods of heightened demand. Depending on the oxidative conditions of tissues and cells, and in addition to its ability to bind oxygen, it also has a nitrite reductase activity whereby it regulates the production of bioactive nitric oxide. Under stress conditions, like hypoxia and anoxia, it also protects cells against reactive oxygen species thanks to its pseudoperoxidase activity. In Perodicticus potto edwarsi (Potto), this protein is Myoglobin (MB).